The following is a 563-amino-acid chain: Developmental regulatory protein wetA (563 aa).

Composition is skewed to polar residues over residues 54–69 (EQSP…THPS) and 160–175 (HKQS…SQFQ). Disordered stretches follow at residues 54–81 (EQSP…SLPP), 112–176 (ASST…QFQK), 272–318 (SNNS…PDLQ), 334–356 (PQRQ…IQNT), 430–494 (PQLH…SPKG), and 516–538 (GVAP…DRRR). Over residues 272–305 (SNNSTVTSSPPSADDIFPSPHSSDPQSMSSWHSD) the composition is skewed to low complexity. Residues 430–441 (PQLHPQSRSPSL) show a composition bias toward polar residues.

It belongs to the wetA family.

Its function is as follows. BrlA, abaA and wetA are pivotal regulators of conidiophore development and conidium maturation. They act individually and together to regulate their own expression and that of numerous other sporulation-specific genes. In Aspergillus oryzae (strain ATCC 42149 / RIB 40) (Yellow koji mold), this protein is Developmental regulatory protein wetA.